Consider the following 81-residue polypeptide: Translational regulator CsrA (81 aa).

Belongs to the CsrA/RsmA family. In terms of assembly, homodimer; the beta-strands of each monomer intercalate to form a hydrophobic core, while the alpha-helices form wings that extend away from the core.

It localises to the cytoplasm. In terms of biological role, a translational regulator that binds mRNA to regulate translation initiation and/or mRNA stability. Usually binds in the 5'-UTR at or near the Shine-Dalgarno sequence preventing ribosome-binding, thus repressing translation. Its main target seems to be the major flagellin gene, while its function is anatagonized by FliW. This is Translational regulator CsrA from Halothermothrix orenii (strain H 168 / OCM 544 / DSM 9562).